We begin with the raw amino-acid sequence, 218 residues long: Glutathione S-transferase Mu 1 (218 aa).

The GST N-terminal domain occupies 2–88 (PMTLGYWDVR…YLARKHGLCG (87 aa)). Residues 7–8 (YW), 46–50 (WLSEK), 59–60 (NL), and 72–73 (QS) contribute to the glutathione site. The 119-residue stretch at 90-208 (TEEERIRVDI…KSSRFIRVPV (119 aa)) folds into the GST C-terminal domain. Y116 serves as a coordination point for substrate.

This sequence belongs to the GST superfamily. Mu family. Homodimer. In terms of tissue distribution, well expressed in rabbit liver, brain and kidney.

Its subcellular location is the cytoplasm. The catalysed reaction is RX + glutathione = an S-substituted glutathione + a halide anion + H(+). In terms of biological role, conjugation of reduced glutathione to a wide number of exogenous and endogenous hydrophobic electrophiles. The protein is Glutathione S-transferase Mu 1 of Oryctolagus cuniculus (Rabbit).